A 220-amino-acid chain; its full sequence is UPF0319 protein CKO_02102 (220 aa).

The first 20 residues, 1–20 (MKTGIITMLFVLYLPVTAFA), serve as a signal peptide directing secretion.

This sequence belongs to the UPF0319 family.

This Citrobacter koseri (strain ATCC BAA-895 / CDC 4225-83 / SGSC4696) protein is UPF0319 protein CKO_02102.